A 313-amino-acid chain; its full sequence is Ketimine reductase mu-crystallin (313 aa).

Arg47 provides a ligand contact to 3,3',5-triiodo-L-thyronine. Ser90, His91, Arg118, Ala143, Val145, Gln146, Asn167, Arg168, Thr169, Asn172, Thr204, Met205, and Val225 together coordinate NADPH. A 3,3',5-triiodo-L-thyronine-binding site is contributed by Glu256. Ser291 lines the NADPH pocket.

This sequence belongs to the ornithine cyclodeaminase/mu-crystallin family. Homodimer. Binds the thyroid hormone triiodothyronine (T3); T3 binding inhibits enzymatic activity. As to expression, expressed in the spiral ligament of the cochlea (at protein level).

It is found in the cytoplasm. The catalysed reaction is L-pipecolate + NADP(+) = Delta(1)-piperideine-2-carboxylate + NADPH + H(+). The enzyme catalyses L-pipecolate + NAD(+) = Delta(1)-piperideine-2-carboxylate + NADH + H(+). It carries out the reaction L-proline + NADP(+) = 1-pyrroline-2-carboxylate + NADPH + H(+). It catalyses the reaction L-proline + NAD(+) = 1-pyrroline-2-carboxylate + NADH + H(+). The catalysed reaction is (3R)-1,4-thiomorpholine-3-carboxylate + NAD(+) = 3,4-dehydrothiomorpholine-3-carboxylate + NADH + 2 H(+). The enzyme catalyses (3R)-1,4-thiomorpholine-3-carboxylate + NADP(+) = 3,4-dehydrothiomorpholine-3-carboxylate + NADPH + 2 H(+). It carries out the reaction (S)-cystathionine ketimine + NADH + 2 H(+) = (3R,5S)-2,3,5,6,7-pentahydro-1,4-thiazepine-3,5-dicarboxylate + NAD(+). It catalyses the reaction (S)-cystathionine ketimine + NADPH + 2 H(+) = (3R,5S)-2,3,5,6,7-pentahydro-1,4-thiazepine-3,5-dicarboxylate + NADP(+). The catalysed reaction is (R)-lanthionine ketimine + NADPH + 2 H(+) = (3R,5R)-1,4-thiomorpholine-3,5-dicarboxylate + NADP(+). The enzyme catalyses Delta(2)-thiazoline-2-carboxylate + NADPH + 2 H(+) = L-thiazolidine-2-carboxylate + NADP(+). In terms of biological role, catalyzes the NAD(P)H-dependent reduction of imine double bonds of a number of cyclic ketimine substrates, including sulfur-containing cyclic ketimines. Under physiological conditions, it efficiently catalyzes delta(1)-piperideine-2-carboxylate (P2C) and delta(1)-pyrroline-2-carboxylate (Pyr2C) reduction, suggesting a central role in lysine and glutamate metabolism. Additional substrates are delta(2)-thiazoline-2-carboxylate (T2C), 3,4-dehydrothiomorpholine-3-carboxylate (AECK), and (R)-lanthionine ketimine (LK) that is reduced at very low rate compared to other substrates. Also catalyzes the NAD(P)H-dependent reduction of (S)-cystathionine ketimine (CysK). This Mus musculus (Mouse) protein is Ketimine reductase mu-crystallin.